A 291-amino-acid polypeptide reads, in one-letter code: 33 kDa chaperonin (291 aa).

2 disulfides stabilise this stretch: C235–C237 and C268–C271.

It belongs to the HSP33 family. Under oxidizing conditions two disulfide bonds are formed involving the reactive cysteines. Under reducing conditions zinc is bound to the reactive cysteines and the protein is inactive.

The protein resides in the cytoplasm. Functionally, redox regulated molecular chaperone. Protects both thermally unfolding and oxidatively damaged proteins from irreversible aggregation. Plays an important role in the bacterial defense system toward oxidative stress. This Bacillus velezensis (strain DSM 23117 / BGSC 10A6 / LMG 26770 / FZB42) (Bacillus amyloliquefaciens subsp. plantarum) protein is 33 kDa chaperonin.